Reading from the N-terminus, the 121-residue chain is Ribonuclease P protein component (121 aa).

The protein belongs to the RnpA family. In terms of assembly, consists of a catalytic RNA component (M1 or rnpB) and a protein subunit.

It catalyses the reaction Endonucleolytic cleavage of RNA, removing 5'-extranucleotides from tRNA precursor.. RNaseP catalyzes the removal of the 5'-leader sequence from pre-tRNA to produce the mature 5'-terminus. It can also cleave other RNA substrates such as 4.5S RNA. The protein component plays an auxiliary but essential role in vivo by binding to the 5'-leader sequence and broadening the substrate specificity of the ribozyme. This Neisseria gonorrhoeae (strain ATCC 700825 / FA 1090) protein is Ribonuclease P protein component.